The chain runs to 215 residues: Adenylate kinase (215 aa).

10 to 15 provides a ligand contact to ATP; that stretch reads GAGKGT. Residues 30 to 59 are NMP; that stretch reads STGDMLRAAVKAGTELGLIAKSVMDSGGLV. Residues Thr31, Arg36, 57–59, 85–88, and Gln92 each bind AMP; these read GLV and GFPR. The segment at 122-159 is LID; it reads GRRVHEASGRVYHTVYNPPKVEGKDDVTGDDLVQRKDD. ATP-binding positions include Arg123 and 132-133; that span reads VY. Positions 156 and 167 each coordinate AMP. Residue Gly201 coordinates ATP.

It belongs to the adenylate kinase family. In terms of assembly, monomer.

Its subcellular location is the cytoplasm. The catalysed reaction is AMP + ATP = 2 ADP. It participates in purine metabolism; AMP biosynthesis via salvage pathway; AMP from ADP: step 1/1. Catalyzes the reversible transfer of the terminal phosphate group between ATP and AMP. Plays an important role in cellular energy homeostasis and in adenine nucleotide metabolism. The polypeptide is Adenylate kinase (Pseudomonas fluorescens (strain SBW25)).